The sequence spans 215 residues: Ran-specific GTPase-activating protein 1 (215 aa).

Composition is skewed to basic and acidic residues over residues Met-1–Lys-18 and Val-26–Lys-35. The segment at Met-1 to Ile-78 is disordered. Phosphoserine is present on Ser-70. Positions His-74–Lys-210 constitute a RanBD1 domain.

This sequence belongs to the RANBP1 family.

It localises to the cytoplasm. In terms of biological role, stimulates the GTPase activity in the presence of RNA1. May potentiate the action of RanGAP1 (RNA1), thus playing the role of a negative regulator. This is Ran-specific GTPase-activating protein 1 (sbp1) from Schizosaccharomyces pombe (strain 972 / ATCC 24843) (Fission yeast).